A 57-amino-acid chain; its full sequence is Large ribosomal subunit protein uL30 (57 aa).

Belongs to the universal ribosomal protein uL30 family. In terms of assembly, part of the 50S ribosomal subunit.

This is Large ribosomal subunit protein uL30 from Maridesulfovibrio salexigens (strain ATCC 14822 / DSM 2638 / NCIMB 8403 / VKM B-1763) (Desulfovibrio salexigens).